The chain runs to 586 residues: Ferredoxin--nitrite reductase, chloroplastic (586 aa).

The span at 1 to 18 (MTSFSLTFTSPLLPSSST) shows a compositional bias: low complexity. The interval 1–20 (MTSFSLTFTSPLLPSSSTKP) is disordered. A chloroplast-targeting transit peptide spans 1–25 (MTSFSLTFTSPLLPSSSTKPKRSVL). A Glycyl lysine isopeptide (Lys-Gly) (interchain with G-Cter in ubiquitin) cross-link involves residue Lys-103. Residues Cys-464, Cys-470, Cys-505, and Cys-509 each coordinate [4Fe-4S] cluster. Position 509 (Cys-509) interacts with siroheme.

It belongs to the nitrite and sulfite reductase 4Fe-4S domain family. As to quaternary structure, monomer. Siroheme serves as cofactor. The cofactor is [4Fe-4S] cluster.

Its subcellular location is the plastid. The protein resides in the chloroplast. The enzyme catalyses 6 oxidized [2Fe-2S]-[ferredoxin] + NH4(+) + 2 H2O = nitrite + 6 reduced [2Fe-2S]-[ferredoxin] + 8 H(+). It functions in the pathway nitrogen metabolism; nitrate reduction (assimilation). Catalyzes the six-electron reduction of nitrite to ammonium. This is Ferredoxin--nitrite reductase, chloroplastic (NIR1) from Arabidopsis thaliana (Mouse-ear cress).